The primary structure comprises 445 residues: Chromosomal replication initiator protein DnaA (445 aa).

The tract at residues 1–72 is domain I, interacts with DnaA modulators; it reads MSGIDTIWEK…QEAFIEEIGE (72 aa). Positions 72–107 are domain II; it reads EKLNIKVISSEDELMNNEKEAPVRKTQQTSQELLPN. A domain III, AAA+ region region spans residues 108 to 324; that stretch reads QLNTDNTFDT…GALTRVSAYS (217 aa). 4 residues coordinate ATP: Gly152, Gly154, Lys155, and Thr156. The segment at 325–445 is domain IV, binds dsDNA; that stretch reads KLVNRELNSD…LKNIEKDITS (121 aa).

This sequence belongs to the DnaA family. Oligomerizes as a right-handed, spiral filament on DNA at oriC.

Its subcellular location is the cytoplasm. Plays an essential role in the initiation and regulation of chromosomal replication. ATP-DnaA binds to the origin of replication (oriC) to initiate formation of the DNA replication initiation complex once per cell cycle. Binds the DnaA box (a 9 base pair repeat at the origin) and separates the double-stranded (ds)DNA. Forms a right-handed helical filament on oriC DNA; dsDNA binds to the exterior of the filament while single-stranded (ss)DNA is stabiized in the filament's interior. The ATP-DnaA-oriC complex binds and stabilizes one strand of the AT-rich DNA unwinding element (DUE), permitting loading of DNA polymerase. After initiation quickly degrades to an ADP-DnaA complex that is not apt for DNA replication. Binds acidic phospholipids. The polypeptide is Chromosomal replication initiator protein DnaA (Macrococcus caseolyticus (strain JCSC5402) (Macrococcoides caseolyticum)).